The sequence spans 953 residues: MSTTTAIDDPAGLKTTRQRNNQPQQSEIPLPSPSISDVDSDSNKGDDHRDAHVKKAYGRTPDGTGMHTLLSPSQTHDMVSQLLDPREPKNLSDYIVLGVLALHIWLAWAVPAPYNKYLLGFAFTFWRLAYNAGIGYLLTVQSKYTLLVTWARRLRAFEQPATNPRPWLYNLLKTELETKIPKDYKMDEAPIEYNTWLAFRRIVDLILMCDFVSYCLFAIVCAHTPEDEGLGMLLGRWVGGIALVGFNLWVKLDAHRVVKDYAWYWGDFFYLIEQELTFDGVFEMAPHPMYSIGYAGYYGISMMAASYDVLFISIAAHALQFVFLAFVENPHIEKTYNPPPPRLRAESEIGSQTEADALVTKELNGNSDIPQPVHNMIGSFDLFRVTDASSLIIVACFIALTVVTPTTRTYQTLAVVNAIFWRLWYSVGLGYILKKQSEKKMYTRHFLKFGESTGEAWRQWKGLYHISMILCHVSFLTACWKMYTYPEDWSYGSVLLKHVIGVSLIALQLWTSSSIYESLGEFGWFYGDFFFESPRPPTYNSIYRFLNNPERVLGAAGFWGLALITWSKAVFVMALVSQLLMLGFISFVEKPHMQKIYGQNLRKEAGLTKFVKKSLPAPVKRWQQGVDKVLDETKHFAEDFIDAALTRLSAGSSNFVKDTTALFHKPLRLSINRIDRDLAGYDPKHYKLSVEGEQLIAPDEKATRKESADARVPKDVKTKVFQYGAPIRVKWTAPANHSKKDWVGLYLVTDNRNRDFTEVPSLGRWIPTCRGQYDTTTDEGIVSYDEKVKSEGVEGPLVQGEMVFEGDKLWWTQGVYEFRYHHHGKHNVMSISEPFEVRIPLVVKEGTELTIEEAENALLPIVRNCLDRDPEIAPETVDEPWGAHVERDGKYAERVVYAIREMFAIEFSPAVVPADGNVKKLAWRVVNGRIALAPYSMSLQSRRPPTPVADSYK.

Positions 1–49 are disordered; it reads MSTTTAIDDPAGLKTTRQRNNQPQQSEIPLPSPSISDVDSDSNKGDDHR. Over 1–93 the chain is Lumenal; that stretch reads MSTTTAIDDP…DPREPKNLSD (93 aa). The segment covering 18–27 has biased composition (polar residues); sequence QRNNQPQQSE. The chain crosses the membrane as a helical span at residues 94-114; that stretch reads YIVLGVLALHIWLAWAVPAPY. Residues 115-117 are Cytoplasmic-facing; the sequence is NKY. Residues 118 to 138 form a helical membrane-spanning segment; sequence LLGFAFTFWRLAYNAGIGYLL. The Lumenal segment spans residues 139–201; sequence TVQSKYTLLV…EYNTWLAFRR (63 aa). Residues 202–222 traverse the membrane as a helical segment; sequence IVDLILMCDFVSYCLFAIVCA. Topologically, residues 223–229 are cytoplasmic; it reads HTPEDEG. A helical transmembrane segment spans residues 230-250; sequence LGMLLGRWVGGIALVGFNLWV. Residues 251–279 are Lumenal-facing; sequence KLDAHRVVKDYAWYWGDFFYLIEQELTFD. A helical transmembrane segment spans residues 280–300; that stretch reads GVFEMAPHPMYSIGYAGYYGI. The Cytoplasmic segment spans residues 301-306; the sequence is SMMAAS. The chain crosses the membrane as a helical span at residues 307-327; that stretch reads YDVLFISIAAHALQFVFLAFV. Over 328 to 384 the chain is Lumenal; sequence ENPHIEKTYNPPPPRLRAESEIGSQTEADALVTKELNGNSDIPQPVHNMIGSFDLFR. A helical membrane pass occupies residues 385-405; sequence VTDASSLIIVACFIALTVVTP. Topologically, residues 406-412 are cytoplasmic; sequence TTRTYQT. The helical transmembrane segment at 413-433 threads the bilayer; the sequence is LAVVNAIFWRLWYSVGLGYIL. Residues 434 to 459 are Lumenal-facing; it reads KKQSEKKMYTRHFLKFGESTGEAWRQ. A helical transmembrane segment spans residues 460–480; the sequence is WKGLYHISMILCHVSFLTACW. The Cytoplasmic segment spans residues 481–490; that stretch reads KMYTYPEDWS. The chain crosses the membrane as a helical span at residues 491–511; it reads YGSVLLKHVIGVSLIALQLWT. The Lumenal portion of the chain corresponds to 512–568; sequence SSSIYESLGEFGWFYGDFFFESPRPPTYNSIYRFLNNPERVLGAAGFWGLALITWSK. A helical transmembrane segment spans residues 569–589; sequence AVFVMALVSQLLMLGFISFVE. At 590–953 the chain is on the cytoplasmic side; the sequence is KPHMQKIYGQ…PPTPVADSYK (364 aa).

Belongs to the class VI-like SAM-binding methyltransferase superfamily. CHO2 family.

It localises to the endoplasmic reticulum membrane. The catalysed reaction is a 1,2-diacyl-sn-glycero-3-phosphoethanolamine + S-adenosyl-L-methionine = a 1,2-diacyl-sn-glycero-3-phospho-N-methylethanolamine + S-adenosyl-L-homocysteine + H(+). The protein operates within phospholipid metabolism; phosphatidylcholine biosynthesis. Catalyzes the first step of the methylation pathway of phosphatidylcholine biosynthesis, the SAM-dependent methylation of phosphatidylethanolamine (PE) to phosphatidylmonomethylethanolamine (PMME). This Podospora anserina (strain S / ATCC MYA-4624 / DSM 980 / FGSC 10383) (Pleurage anserina) protein is Phosphatidylethanolamine N-methyltransferase (CHO2).